The sequence spans 783 residues: Transcription factor E4F1 (783 aa).

Residues 40 to 84 (GFLGLPAPFSEEDEDDVHRCGRCQVEFTALEDFVQHKIQKTCHRA) are required for ubiquitin ligase activity. A Phosphoserine modification is found at Ser-49. The mediates dimerization, DNA-binding, transcription repression of CCNA2 and interaction with HMGA2 stretch occupies residues 185–264 (LLVNKEGRYV…GKSFRESGAL (80 aa)). 2 C2H2-type zinc fingers span residues 193–215 (YVCMLCHKTFKTGSILKAHMVTH) and 221–243 (HECKLCGASFRTKGSLIRHHRRH). The C2H2-type 3; degenerate zinc finger occupies 249 to 273 (YKCAKCGKSFRESGALTRHLKSLTP). A mediates interaction with CDKN2A region spans residues 368–565 (NLLHQAMQNS…REKGSLVRHV (198 aa)). A disordered region spans residues 386–407 (GEESALEPAPPSGSSPQCLGDG). 5 C2H2-type zinc fingers span residues 434 to 456 (HPCPQCSETFPTAATLEAHKRGH), 462 to 484 (FTCTQCGKAFPKAYLLKKHQEVH), 490 to 512 (FRCGDCGKLYKTIAHVRGHRRVH), 518 to 540 (FPCPQCGKRYKTKNAQQVHFRTH), and 546 to 568 (HVCQFCSRGFREKGSLVRHVRHH). The interaction with BMI1 stretch occupies residues 434–598 (HPCPQCSETF…LNRHLRTKGG (165 aa)). The tract at residues 520-579 (CPQCGKRYKTKNAQQVHFRTHLEEKPHVCQFCSRGFREKGSLVRHVRHHTGEKPFKCYKC) is mediates interaction with TP53. The segment at 574-596 (FKCYKCGRGFAEHGTLNRHLRTK) adopts a C2H2-type 9; degenerate zinc-finger fold. The tract at residues 574–596 (FKCYKCGRGFAEHGTLNRHLRTK) is mediates interaction with RASSF1.

As to quaternary structure, homodimer; binds DNA as a dimer. Forms a complex with CDKN2A and TP53. Interacts with HDAC1, HMGA2 and RASSF1. Interactions with TP53, RB1, ANP32A and probably BMI1 and FHL2 regulate E4F1 activity. Post-translationally, phosphorylated; phosphorylation is cell cycle-dependent and regulates DNA-binding activity and function. In terms of processing, may be sumoylated by UBE2I upon interaction with CDKN2A. In terms of tissue distribution, ubiquitously expressed.

It is found in the nucleus. The protein resides in the nucleoplasm. Its subcellular location is the cytoplasm. It carries out the reaction S-ubiquitinyl-[E2 ubiquitin-conjugating enzyme]-L-cysteine + [acceptor protein]-L-lysine = [E2 ubiquitin-conjugating enzyme]-L-cysteine + N(6)-ubiquitinyl-[acceptor protein]-L-lysine.. It functions in the pathway protein modification; protein ubiquitination. In terms of biological role, may function as a transcriptional repressor. May also function as a ubiquitin ligase mediating ubiquitination of chromatin-associated TP53. Functions in cell survival and proliferation through control of the cell cycle. Functions in the p53 and pRB tumor suppressor pathways and regulates the cyclin CCNA2 transcription. This is Transcription factor E4F1 (E4f1) from Mus musculus (Mouse).